Consider the following 93-residue polypeptide: Pyrimidine/purine nucleoside phosphorylase (93 aa).

Belongs to the nucleoside phosphorylase PpnP family.

The enzyme catalyses a purine D-ribonucleoside + phosphate = a purine nucleobase + alpha-D-ribose 1-phosphate. It carries out the reaction adenosine + phosphate = alpha-D-ribose 1-phosphate + adenine. It catalyses the reaction cytidine + phosphate = cytosine + alpha-D-ribose 1-phosphate. The catalysed reaction is guanosine + phosphate = alpha-D-ribose 1-phosphate + guanine. The enzyme catalyses inosine + phosphate = alpha-D-ribose 1-phosphate + hypoxanthine. It carries out the reaction thymidine + phosphate = 2-deoxy-alpha-D-ribose 1-phosphate + thymine. It catalyses the reaction uridine + phosphate = alpha-D-ribose 1-phosphate + uracil. The catalysed reaction is xanthosine + phosphate = alpha-D-ribose 1-phosphate + xanthine. Functionally, catalyzes the phosphorolysis of diverse nucleosides, yielding D-ribose 1-phosphate and the respective free bases. Can use uridine, adenosine, guanosine, cytidine, thymidine, inosine and xanthosine as substrates. Also catalyzes the reverse reactions. The sequence is that of Pyrimidine/purine nucleoside phosphorylase from Magnetococcus marinus (strain ATCC BAA-1437 / JCM 17883 / MC-1).